We begin with the raw amino-acid sequence, 385 residues long: Acetylornithine deacetylase (385 aa).

A Zn(2+)-binding site is contributed by histidine 80. The active site involves aspartate 82. Aspartate 112 provides a ligand contact to Zn(2+). The active-site Proton acceptor is the glutamate 144. The Zn(2+) site is built by glutamate 145, glutamate 169, and histidine 355.

This sequence belongs to the peptidase M20A family. ArgE subfamily. As to quaternary structure, homodimer. Zn(2+) is required as a cofactor. Co(2+) serves as cofactor. Requires glutathione as cofactor.

It localises to the cytoplasm. It catalyses the reaction N(2)-acetyl-L-ornithine + H2O = L-ornithine + acetate. It participates in amino-acid biosynthesis; L-arginine biosynthesis; L-ornithine from N(2)-acetyl-L-ornithine (linear): step 1/1. Catalyzes the hydrolysis of the amide bond of N(2)-acetylated L-amino acids. Cleaves the acetyl group from N-acetyl-L-ornithine to form L-ornithine, an intermediate in L-arginine biosynthesis pathway, and a branchpoint in the synthesis of polyamines. This is Acetylornithine deacetylase from Photorhabdus laumondii subsp. laumondii (strain DSM 15139 / CIP 105565 / TT01) (Photorhabdus luminescens subsp. laumondii).